We begin with the raw amino-acid sequence, 565 residues long: Dihydroxy-acid dehydratase (565 aa).

Asp80 lines the Mg(2+) pocket. A [2Fe-2S] cluster-binding site is contributed by Cys121. 2 residues coordinate Mg(2+): Asp122 and Lys123. Lys123 is modified (N6-carboxylysine). Cys194 provides a ligand contact to [2Fe-2S] cluster. Glu447 contributes to the Mg(2+) binding site. Catalysis depends on Ser473, which acts as the Proton acceptor.

Belongs to the IlvD/Edd family. As to quaternary structure, homodimer. It depends on [2Fe-2S] cluster as a cofactor. Requires Mg(2+) as cofactor.

It carries out the reaction (2R)-2,3-dihydroxy-3-methylbutanoate = 3-methyl-2-oxobutanoate + H2O. It catalyses the reaction (2R,3R)-2,3-dihydroxy-3-methylpentanoate = (S)-3-methyl-2-oxopentanoate + H2O. The protein operates within amino-acid biosynthesis; L-isoleucine biosynthesis; L-isoleucine from 2-oxobutanoate: step 3/4. It functions in the pathway amino-acid biosynthesis; L-valine biosynthesis; L-valine from pyruvate: step 3/4. Functions in the biosynthesis of branched-chain amino acids. Catalyzes the dehydration of (2R,3R)-2,3-dihydroxy-3-methylpentanoate (2,3-dihydroxy-3-methylvalerate) into 2-oxo-3-methylpentanoate (2-oxo-3-methylvalerate) and of (2R)-2,3-dihydroxy-3-methylbutanoate (2,3-dihydroxyisovalerate) into 2-oxo-3-methylbutanoate (2-oxoisovalerate), the penultimate precursor to L-isoleucine and L-valine, respectively. This is Dihydroxy-acid dehydratase from Chlorobium phaeovibrioides (strain DSM 265 / 1930) (Prosthecochloris vibrioformis (strain DSM 265)).